A 151-amino-acid chain; its full sequence is FAD synthase (151 aa).

ATP contacts are provided by residues 9–10 (TF), 14–17 (HPGH), aspartate 96, and tyrosine 123.

It belongs to the archaeal FAD synthase family. In terms of assembly, homodimer. A divalent metal cation is required as a cofactor.

It catalyses the reaction FMN + ATP + H(+) = FAD + diphosphate. The protein operates within cofactor biosynthesis; FAD biosynthesis; FAD from FMN: step 1/1. In terms of biological role, catalyzes the transfer of the AMP portion of ATP to flavin mononucleotide (FMN) to produce flavin adenine dinucleotide (FAD) coenzyme. The chain is FAD synthase from Methanothermobacter thermautotrophicus (strain ATCC 29096 / DSM 1053 / JCM 10044 / NBRC 100330 / Delta H) (Methanobacterium thermoautotrophicum).